We begin with the raw amino-acid sequence, 270 residues long: Dermonecrotic toxin LhSicTox-alphaIA2aiii (270 aa).

H2 is an active-site residue. Residues E22 and D24 each coordinate Mg(2+). Catalysis depends on H38, which acts as the Nucleophile. 2 cysteine pairs are disulfide-bonded: C42–C48 and C44–C187. D82 is a binding site for Mg(2+).

Belongs to the arthropod phospholipase D family. Class II subfamily. Requires Mg(2+) as cofactor. Expressed by the venom gland.

The protein resides in the secreted. The catalysed reaction is an N-(acyl)-sphingosylphosphocholine = an N-(acyl)-sphingosyl-1,3-cyclic phosphate + choline. The enzyme catalyses an N-(acyl)-sphingosylphosphoethanolamine = an N-(acyl)-sphingosyl-1,3-cyclic phosphate + ethanolamine. It catalyses the reaction a 1-acyl-sn-glycero-3-phosphocholine = a 1-acyl-sn-glycero-2,3-cyclic phosphate + choline. It carries out the reaction a 1-acyl-sn-glycero-3-phosphoethanolamine = a 1-acyl-sn-glycero-2,3-cyclic phosphate + ethanolamine. Dermonecrotic toxins cleave the phosphodiester linkage between the phosphate and headgroup of certain phospholipids (sphingolipid and lysolipid substrates), forming an alcohol (often choline) and a cyclic phosphate. This toxin acts on sphingomyelin (SM). It may also act on ceramide phosphoethanolamine (CPE), lysophosphatidylcholine (LPC) and lysophosphatidylethanolamine (LPE), but not on lysophosphatidylserine (LPS), and lysophosphatidylglycerol (LPG). It acts by transphosphatidylation, releasing exclusively cyclic phosphate products as second products. Induces dermonecrosis, hemolysis, increased vascular permeability, edema, inflammatory response, and platelet aggregation. The polypeptide is Dermonecrotic toxin LhSicTox-alphaIA2aiii (Loxosceles hirsuta (Recluse spider)).